Here is a 1444-residue protein sequence, read N- to C-terminus: DNA polymerase III PolC-type (1444 aa).

Positions 421-577 (YVVFDVETTG…ADAEATGYLL (157 aa)) constitute an Exonuclease domain.

Belongs to the DNA polymerase type-C family. PolC subfamily.

The protein localises to the cytoplasm. The enzyme catalyses DNA(n) + a 2'-deoxyribonucleoside 5'-triphosphate = DNA(n+1) + diphosphate. In terms of biological role, required for replicative DNA synthesis. This DNA polymerase also exhibits 3' to 5' exonuclease activity. This chain is DNA polymerase III PolC-type, found in Lacticaseibacillus paracasei (strain ATCC 334 / BCRC 17002 / CCUG 31169 / CIP 107868 / KCTC 3260 / NRRL B-441) (Lactobacillus paracasei).